A 359-amino-acid polypeptide reads, in one-letter code: Pyruvate dehydrogenase E1 component subunit beta, mitochondrial (359 aa).

The transit peptide at 1–30 (MAAVSGLVRRPLREVSRLLKRRFHWTAPAA) directs the protein to the mitochondrion. Tyr-67 is modified (phosphotyrosine). Residue Glu-89 participates in thiamine diphosphate binding. Residues Ile-142, Ala-190, Ile-191, Asp-193, and Asn-195 each contribute to the K(+) site. N6-acetyllysine is present on Lys-354.

Heterotetramer of two PDHA1 and two PDHB subunits. The heterotetramer interacts with DLAT, and is part of the multimeric pyruvate dehydrogenase complex that contains multiple copies of pyruvate dehydrogenase (E1), dihydrolipoamide acetyltransferase (DLAT, E2) and lipoamide dehydrogenase (DLD, E3). These subunits are bound to an inner core composed of about 48 DLAT and 12 PDHX molecules. Interacts with DLAT. The cofactor is thiamine diphosphate.

It localises to the mitochondrion matrix. It catalyses the reaction N(6)-[(R)-lipoyl]-L-lysyl-[protein] + pyruvate + H(+) = N(6)-[(R)-S(8)-acetyldihydrolipoyl]-L-lysyl-[protein] + CO2. In terms of biological role, the pyruvate dehydrogenase complex catalyzes the overall conversion of pyruvate to acetyl-CoA and CO(2), and thereby links the glycolytic pathway to the tricarboxylic cycle. In Pongo abelii (Sumatran orangutan), this protein is Pyruvate dehydrogenase E1 component subunit beta, mitochondrial (PDHB).